The sequence spans 95 residues: Aspartyl/glutamyl-tRNA(Asn/Gln) amidotransferase subunit C (95 aa).

The protein belongs to the GatC family. Heterotrimer of A, B and C subunits.

The enzyme catalyses L-glutamyl-tRNA(Gln) + L-glutamine + ATP + H2O = L-glutaminyl-tRNA(Gln) + L-glutamate + ADP + phosphate + H(+). It catalyses the reaction L-aspartyl-tRNA(Asn) + L-glutamine + ATP + H2O = L-asparaginyl-tRNA(Asn) + L-glutamate + ADP + phosphate + 2 H(+). Allows the formation of correctly charged Asn-tRNA(Asn) or Gln-tRNA(Gln) through the transamidation of misacylated Asp-tRNA(Asn) or Glu-tRNA(Gln) in organisms which lack either or both of asparaginyl-tRNA or glutaminyl-tRNA synthetases. The reaction takes place in the presence of glutamine and ATP through an activated phospho-Asp-tRNA(Asn) or phospho-Glu-tRNA(Gln). This chain is Aspartyl/glutamyl-tRNA(Asn/Gln) amidotransferase subunit C, found in Alcanivorax borkumensis (strain ATCC 700651 / DSM 11573 / NCIMB 13689 / SK2).